Reading from the N-terminus, the 339-residue chain is Tetracenomycin polyketide synthesis 8-O-methyl transferase TcmO (339 aa).

S-adenosyl-L-methionine-binding positions include Asp-200 and 226–228; that span reads GDF. His-246 acts as the Proton acceptor in catalysis.

Belongs to the class I-like SAM-binding methyltransferase superfamily. Cation-independent O-methyltransferase family.

It participates in antibiotic biosynthesis; tetracenomycin C biosynthesis. The protein is Tetracenomycin polyketide synthesis 8-O-methyl transferase TcmO (tcmO) of Streptomyces glaucescens.